Here is a 194-residue protein sequence, read N- to C-terminus: Imidazoleglycerol-phosphate dehydratase (194 aa).

It belongs to the imidazoleglycerol-phosphate dehydratase family.

Its subcellular location is the cytoplasm. The enzyme catalyses D-erythro-1-(imidazol-4-yl)glycerol 3-phosphate = 3-(imidazol-4-yl)-2-oxopropyl phosphate + H2O. It functions in the pathway amino-acid biosynthesis; L-histidine biosynthesis; L-histidine from 5-phospho-alpha-D-ribose 1-diphosphate: step 6/9. This Listeria monocytogenes serotype 4b (strain F2365) protein is Imidazoleglycerol-phosphate dehydratase.